We begin with the raw amino-acid sequence, 339 residues long: Dihydroorotase (339 aa).

Zn(2+) is bound by residues His12 and His14. Residues 14–16 (HVR) and Asn40 each bind substrate. Lys94, His133, His167, and Asp239 together coordinate Zn(2+). Lys94 carries the post-translational modification N6-carboxylysine. His133 lines the substrate pocket. Asp239 is an active-site residue. Positions 243 and 255 each coordinate substrate.

The protein belongs to the metallo-dependent hydrolases superfamily. DHOase family. Class II DHOase subfamily. Homodimer. Zn(2+) is required as a cofactor.

The catalysed reaction is (S)-dihydroorotate + H2O = N-carbamoyl-L-aspartate + H(+). It functions in the pathway pyrimidine metabolism; UMP biosynthesis via de novo pathway; (S)-dihydroorotate from bicarbonate: step 3/3. Functionally, catalyzes the reversible cyclization of carbamoyl aspartate to dihydroorotate. The polypeptide is Dihydroorotase (Helicobacter pylori (strain G27)).